The chain runs to 389 residues: Na(+)/H(+) antiporter NhaA (389 aa).

Transmembrane regions (helical) follow at residues 17-37 (ILLL…LAGF), 59-79 (LLLW…GLEV), 95-115 (SLPT…YLLF), 124-144 (AGWA…MALL), 154-174 (VFLL…IALF), 177-197 (SDLS…LVAL), 213-233 (LILW…GVII), 261-281 (FLIL…NMSL), 292-312 (IALG…FVAV), 328-348 (IAPV…IASL), and 363-383 (LGTL…LSKV).

It belongs to the NhaA Na(+)/H(+) (TC 2.A.33) antiporter family.

It localises to the cell inner membrane. It carries out the reaction Na(+)(in) + 2 H(+)(out) = Na(+)(out) + 2 H(+)(in). Functionally, na(+)/H(+) antiporter that extrudes sodium in exchange for external protons. In Shewanella oneidensis (strain ATCC 700550 / JCM 31522 / CIP 106686 / LMG 19005 / NCIMB 14063 / MR-1), this protein is Na(+)/H(+) antiporter NhaA.